The following is a 314-amino-acid chain: tRNA dimethylallyltransferase (314 aa).

Residue 11 to 18 (GPTGSGKT) participates in ATP binding. 13–18 (TGSGKT) lines the substrate pocket. An interaction with substrate tRNA region spans residues 36–39 (DSMQ).

Belongs to the IPP transferase family. In terms of assembly, monomer. It depends on Mg(2+) as a cofactor.

It carries out the reaction adenosine(37) in tRNA + dimethylallyl diphosphate = N(6)-dimethylallyladenosine(37) in tRNA + diphosphate. Its function is as follows. Catalyzes the transfer of a dimethylallyl group onto the adenine at position 37 in tRNAs that read codons beginning with uridine, leading to the formation of N6-(dimethylallyl)adenosine (i(6)A). The sequence is that of tRNA dimethylallyltransferase from Chlamydia trachomatis serovar D (strain ATCC VR-885 / DSM 19411 / UW-3/Cx).